The primary structure comprises 53 residues: Conotoxin Cal22e (53 aa).

The propeptide occupies 1-5 (GRPSA).

Contains 4 disulfide bonds. In terms of tissue distribution, expressed by the venom duct.

The protein localises to the secreted. Probable neurotoxin with unknown target. Possibly targets ion channels. The polypeptide is Conotoxin Cal22e (Californiconus californicus (California cone)).